A 484-amino-acid chain; its full sequence is ATP synthase subunit beta (484 aa).

Gly162–Thr169 lines the ATP pocket.

Belongs to the ATPase alpha/beta chains family. As to quaternary structure, F-type ATPases have 2 components, CF(1) - the catalytic core - and CF(0) - the membrane proton channel. CF(1) has five subunits: alpha(3), beta(3), gamma(1), delta(1), epsilon(1). CF(0) has four main subunits: a(1), b(1), b'(1) and c(9-12).

It localises to the cellular thylakoid membrane. It catalyses the reaction ATP + H2O + 4 H(+)(in) = ADP + phosphate + 5 H(+)(out). Its function is as follows. Produces ATP from ADP in the presence of a proton gradient across the membrane. The catalytic sites are hosted primarily by the beta subunits. This Synechococcus elongatus (strain ATCC 33912 / PCC 7942 / FACHB-805) (Anacystis nidulans R2) protein is ATP synthase subunit beta.